The chain runs to 60 residues: Small ribosomal subunit protein bS21 (60 aa).

Residues 39–60 form a disordered region; that stretch reads ETPQEKRKRKAVARRRQRTRRR. Over residues 44–60 the composition is skewed to basic residues; the sequence is KRKRKAVARRRQRTRRR.

The protein belongs to the bacterial ribosomal protein bS21 family.

This is Small ribosomal subunit protein bS21 from Microcystis aeruginosa (strain NIES-843 / IAM M-2473).